A 292-amino-acid chain; its full sequence is ATP synthase gamma chain (292 aa).

The protein belongs to the ATPase gamma chain family. F-type ATPases have 2 components, CF(1) - the catalytic core - and CF(0) - the membrane proton channel. CF(1) has five subunits: alpha(3), beta(3), gamma(1), delta(1), epsilon(1). CF(0) has three main subunits: a, b and c.

The protein resides in the cell membrane. Functionally, produces ATP from ADP in the presence of a proton gradient across the membrane. The gamma chain is believed to be important in regulating ATPase activity and the flow of protons through the CF(0) complex. The protein is ATP synthase gamma chain of Streptococcus thermophilus (strain CNRZ 1066).